Here is a 182-residue protein sequence, read N- to C-terminus: Adenine phosphoribosyltransferase (182 aa).

The protein belongs to the purine/pyrimidine phosphoribosyltransferase family. In terms of assembly, homodimer.

It localises to the cytoplasm. It catalyses the reaction AMP + diphosphate = 5-phospho-alpha-D-ribose 1-diphosphate + adenine. It participates in purine metabolism; AMP biosynthesis via salvage pathway; AMP from adenine: step 1/1. In terms of biological role, catalyzes a salvage reaction resulting in the formation of AMP, that is energically less costly than de novo synthesis. This is Adenine phosphoribosyltransferase from Sulfurimonas denitrificans (strain ATCC 33889 / DSM 1251) (Thiomicrospira denitrificans (strain ATCC 33889 / DSM 1251)).